A 296-amino-acid chain; its full sequence is Elongation factor Ts (296 aa).

The involved in Mg(2+) ion dislocation from EF-Tu stretch occupies residues 82–85 (TDFV).

Belongs to the EF-Ts family.

The protein resides in the cytoplasm. Functionally, associates with the EF-Tu.GDP complex and induces the exchange of GDP to GTP. It remains bound to the aminoacyl-tRNA.EF-Tu.GTP complex up to the GTP hydrolysis stage on the ribosome. This Aromatoleum aromaticum (strain DSM 19018 / LMG 30748 / EbN1) (Azoarcus sp. (strain EbN1)) protein is Elongation factor Ts.